An 862-amino-acid chain; its full sequence is MDGLKEITAAVASLGGTTDLSTYMVNFDLGDMMDQSAGVVIDDVHPPVEGASVDSAMDVDAESEDEKDEEPGTGRDEPEVESEADEDPDEVEDAIPAAVPSTIPLSTTIRGFGADLGLGKNLTPADLAGNGLGKYAATLFSKTLPTLAAVVEQKGAIDPGSSVAKSIVTLLSSELGNALGIFSRLPTREQNKMAAVMILMKVLGRTALPPLTKTDEGVLSAINLVFSGAKRKVLVSTHSDITKFIIFNDDGTIPTLGVDTVAPLMKYYDPRLKLTTLVLIKNLGNNGTVEVKRRSKGKTLVMRERIPVECFLFRAFPVTESSDNIYATLDFVKRLLKGVSTQSSYVYVKNPKSIGDDFLNTKNTSLTLGDAPLTVKLSFRKPTNATSQSGFKRWLLICKWLARGGRIELGPKSTLRSGHEEESLEEEVNTGCIRSMASLTRLASRAWSPKNILKVNDRPVMTPSILNEIPDFVHRGNTLPIWLLFAASLRLDIVAVKEWLSTEGGDPRSIDVAKLTYHQYLFLRLLSDAGIAKKGLSKLLTATNNWLITEMSFIVMYKGSYGVNPTVLSTISDNNVPNLPIFSWIGEIPLWSTSGIVEKVKIVHTNSSLVSRMMLLSDVTEVAKVHAIKAKVRAEQKASKESAKGEDAAKKAPKRKREAEAGTETPKKKQKEEKSEKPKKTGKAEKSTGTAKVTKKEKTEKKTPQTKSTNKKNVKSVSAEAGTAVTPDEANGKKKSTQVKKKESAGQHTTEKKKRTAAKKKTVDRPSGHRPSSKKEYRSQEFVSSDDSSDEEVISKPRVTTTENMKSTKKATLASNMDDDGDDDGFMTCAGQFDIGGGSGFLTSTAGRNRKSNKQSKTLLLS.

Disordered regions lie at residues 45-91, 633-824, and 837-862; these read HPPV…PDEV, RAEQ…GDDD, and GGSG…LLLS. 2 stretches are compositionally biased toward acidic residues: residues 57–69 and 78–91; these read MDVD…EKDE and PEVE…PDEV. 3 stretches are compositionally biased toward basic and acidic residues: residues 633 to 650, 657 to 686, and 694 to 703; these read RAEQ…DAAK, REAE…KAEK, and TKKEKTEKKT. A compositionally biased stretch (basic residues) spans 751–760; the sequence is EKKKRTAAKK. A compositionally biased stretch (basic and acidic residues) spans 761 to 779; the sequence is KTVDRPSGHRPSSKKEYRS.

This is an uncharacterized protein from Ictaluridae (bullhead catfishes).